A 95-amino-acid polypeptide reads, in one-letter code: RING finger protein Z (95 aa).

Residues 1-16 show a composition bias toward low complexity; that stretch reads MGNSKSKSNPSSSSES. Residues 1–23 form a disordered region; that stretch reads MGNSKSKSNPSSSSESQKGAPTV. Residue Gly2 is the site of N-myristoyl glycine; by host attachment. The segment at 40 to 76 adopts an RING-type; atypical zinc-finger fold; it reads CKCCWFADKNLIKCSDHYLCLRCLNVMLKNSDLCNIC. The short motif at 90 to 93 is the PTAP/PSAP motif element; sequence PSAP.

It belongs to the arenaviridae Z protein family. Interacts with protein NP; this interaction probably directs the encapsidated genome to budding sites. Interacts (via RING domain) with polymerase L; this interaction inhibits viral transcription and replication, Z partially blocks the product exit tunnel for the releasing nascent RNA product. Interacts with the glycoprotein complex; this interaction plays a role in virion budding. Interacts with host eIF4E; this interaction results in eIF4E reduced affinity for its substrate, the 5'-m7 G cap structure. Interacts (via late-budding domain) with host TSG101; this interaction is essential for budding and release of viral particles. Interacts with host RPLP0; this interaction may serve to load ribosome-like particles inside the virion. Interacts with host PML; this interaction induces PML bodies redistribution in the cytoplasm upon viral infection. Post-translationally, myristoylation is required for the role of RING finger protein Z in assembly and budding.

The protein resides in the virion. Its subcellular location is the host cytoplasm. The protein localises to the host perinuclear region. It is found in the host cell membrane. Its function is as follows. Plays a crucial role in virion assembly and budding. Expressed late in the virus life cycle, it acts as an inhibitor of viral transcription and RNA synthesis by interacting with the viral polymerase L. Presumably recruits the NP encapsidated genome to cellular membranes at budding sites via direct interaction with NP. Plays critical roles in the final steps of viral release by interacting with host TSG101, a member of the vacuolar protein-sorting pathway and using other cellular host proteins involved in vesicle formation pathway. The budding of the virus progeny occurs after association of protein Z with the viral glycoprotein complex SSP-GP1-GP2 at the cell periphery, step that requires myristoylation of protein Z. Also selectively represses protein production by associating with host eIF4E. In cell-based minigenome assay, has an inhibitory effect on the ribonucleoprotein machinery (vRNP), which is responsible for the replication and transcription of the viral genome. The sequence is that of RING finger protein Z from Guanarito mammarenavirus (isolate Human/Venezuela/NH-95551/1990) (GTOV).